A 493-amino-acid polypeptide reads, in one-letter code: Alpha-amylase-related protein (493 aa).

Residues 1–19 form the signal peptide; that stretch reads MFKFALALTLCLAGSLSLA. Gln20 is modified (pyrrolidone carboxylic acid). A disulfide bridge links Cys47 with Cys103. Asn117, Gln168, and Asp177 together coordinate Ca(2+). Cys156 and Cys170 are joined by a disulfide. Arg205 provides a ligand contact to chloride. The active-site Nucleophile is Asp207. Residue His211 participates in Ca(2+) binding. The active-site Proton donor is Glu244. Chloride contacts are provided by Asn307 and Arg342. Cystine bridges form between Cys375–Cys381, Cys417–Cys440, and Cys447–Cys459.

It belongs to the glycosyl hydrolase 13 family. As to quaternary structure, monomer. Ca(2+) serves as cofactor. Requires chloride as cofactor.

It localises to the secreted. The enzyme catalyses Endohydrolysis of (1-&gt;4)-alpha-D-glucosidic linkages in polysaccharides containing three or more (1-&gt;4)-alpha-linked D-glucose units.. The protein is Alpha-amylase-related protein (Amyrel) of Drosophila elegans (Fruit fly).